The primary structure comprises 155 residues: Protein-export protein SecB 1 (155 aa).

Belongs to the SecB family. Homotetramer, a dimer of dimers. One homotetramer interacts with 1 SecA dimer.

It is found in the cytoplasm. Functionally, one of the proteins required for the normal export of preproteins out of the cell cytoplasm. It is a molecular chaperone that binds to a subset of precursor proteins, maintaining them in a translocation-competent state. It also specifically binds to its receptor SecA. The sequence is that of Protein-export protein SecB 1 from Polaromonas naphthalenivorans (strain CJ2).